The primary structure comprises 454 residues: Adenosylmethionine-8-amino-7-oxononanoate aminotransferase (454 aa).

Position 119 to 120 (119 to 120 (GA)) interacts with pyridoxal 5'-phosphate. Substrate is bound at residue tyrosine 152. Position 257 (aspartate 257) interacts with pyridoxal 5'-phosphate. Residues lysine 286, glycine 321, and arginine 416 each contribute to the substrate site. An N6-(pyridoxal phosphate)lysine modification is found at lysine 286.

This sequence belongs to the class-III pyridoxal-phosphate-dependent aminotransferase family. BioA subfamily. Homodimer. It depends on pyridoxal 5'-phosphate as a cofactor.

Its subcellular location is the cytoplasm. It catalyses the reaction (8S)-8-amino-7-oxononanoate + S-adenosyl-L-methionine = S-adenosyl-4-methylsulfanyl-2-oxobutanoate + (7R,8S)-7,8-diammoniononanoate. It functions in the pathway cofactor biosynthesis; biotin biosynthesis; 7,8-diaminononanoate from 8-amino-7-oxononanoate (SAM route): step 1/1. Functionally, catalyzes the transfer of the alpha-amino group from S-adenosyl-L-methionine (SAM) to 7-keto-8-aminopelargonic acid (KAPA) to form 7,8-diaminopelargonic acid (DAPA). It is the only aminotransferase known to utilize SAM as an amino donor. This Anoxybacillus flavithermus (strain DSM 21510 / WK1) protein is Adenosylmethionine-8-amino-7-oxononanoate aminotransferase.